Here is a 495-residue protein sequence, read N- to C-terminus: MAKQKIRVRYAPSPTGHLHIGNARTALFNYLFARHYKGKFILRIEDTDQSRNIADGEKSQIDNLKWLGMDWDEGPDKPGEYGPYRQSERKGIYQPLIDQLVAEGKAYESYMTEEELAAQREEQKANGEMPHYVDEYAGLSPEQKEQKIADAKAAGIEPVIRFKVPTNTTYEWDDLVKGHISFESETIGGDFVIQKRDGMPTYNFAVVVDDHMMEISHVFRGDDHVANTPKQLMIYEALGWDAPQFGHMSLIINTETGKKLSKRDESILQFIEQYRSLGYLPEAMLNFIILLGWSPVGESEIFTLREFVKMYDEKRLSKSPAAFDAKKLEWINNQYVKAADEDRIMHSALLQLINAGKIEKNPAPMKVEWARKLINLFKRQMSYTAQIVEFTELFFNGPENIDEEAKEELATDDALPVLKALEKQFSDLPVFDTVNILAAIKAVQKETGIKGRKLWMPIRIAITHEMHGPELPESLELLGYELSMQHLRAMIEELS.

The 'HIGH' region motif lies at 12-22 (PSPTGHLHIGN). The 'KMSKS' region signature appears at 259-263 (KLSKR). Lys262 provides a ligand contact to ATP.

The protein belongs to the class-I aminoacyl-tRNA synthetase family. Glutamate--tRNA ligase type 1 subfamily. As to quaternary structure, monomer.

The protein resides in the cytoplasm. The catalysed reaction is tRNA(Glu) + L-glutamate + ATP = L-glutamyl-tRNA(Glu) + AMP + diphosphate. Its function is as follows. Catalyzes the attachment of glutamate to tRNA(Glu) in a two-step reaction: glutamate is first activated by ATP to form Glu-AMP and then transferred to the acceptor end of tRNA(Glu). In Pediococcus pentosaceus (strain ATCC 25745 / CCUG 21536 / LMG 10740 / 183-1w), this protein is Glutamate--tRNA ligase.